Reading from the N-terminus, the 481-residue chain is Proline--tRNA ligase (481 aa).

It belongs to the class-II aminoacyl-tRNA synthetase family. ProS type 3 subfamily. Homodimer.

Its subcellular location is the cytoplasm. The enzyme catalyses tRNA(Pro) + L-proline + ATP = L-prolyl-tRNA(Pro) + AMP + diphosphate. Functionally, catalyzes the attachment of proline to tRNA(Pro) in a two-step reaction: proline is first activated by ATP to form Pro-AMP and then transferred to the acceptor end of tRNA(Pro). In Chlorobium phaeobacteroides (strain DSM 266 / SMG 266 / 2430), this protein is Proline--tRNA ligase.